The following is a 307-amino-acid chain: D-alanine--D-alanine ligase (307 aa).

An ATP-grasp domain is found at 101–301 (KDVLRAAGVP…FGELVRWMVE (201 aa)). 128-182 (MTPPYVVKPLGEGSSFGVIIVRADQTHPPQELTRDDWAYGDLVLVERFVAGRELT) provides a ligand contact to ATP. Mg(2+) contacts are provided by Asp251, Glu268, and Asn270.

The protein belongs to the D-alanine--D-alanine ligase family. The cofactor is Mg(2+). It depends on Mn(2+) as a cofactor.

It is found in the cytoplasm. It catalyses the reaction 2 D-alanine + ATP = D-alanyl-D-alanine + ADP + phosphate + H(+). It participates in cell wall biogenesis; peptidoglycan biosynthesis. Cell wall formation. In Methylocella silvestris (strain DSM 15510 / CIP 108128 / LMG 27833 / NCIMB 13906 / BL2), this protein is D-alanine--D-alanine ligase.